The chain runs to 672 residues: tRNA 5-methylaminomethyl-2-thiouridine biosynthesis bifunctional protein MnmC (672 aa).

The segment at 1-241 (MHKVQFADVH…KRECLQGVKA (241 aa)) is tRNA (mnm(5)s(2)U34)-methyltransferase. The segment at 269–672 (IGGGIASVFS…LLKGSQVKQG (404 aa)) is FAD-dependent cmnm(5)s(2)U34 oxidoreductase.

It in the N-terminal section; belongs to the methyltransferase superfamily. tRNA (mnm(5)s(2)U34)-methyltransferase family. The protein in the C-terminal section; belongs to the DAO family. FAD serves as cofactor.

Its subcellular location is the cytoplasm. The enzyme catalyses 5-aminomethyl-2-thiouridine(34) in tRNA + S-adenosyl-L-methionine = 5-methylaminomethyl-2-thiouridine(34) in tRNA + S-adenosyl-L-homocysteine + H(+). Functionally, catalyzes the last two steps in the biosynthesis of 5-methylaminomethyl-2-thiouridine (mnm(5)s(2)U) at the wobble position (U34) in tRNA. Catalyzes the FAD-dependent demodification of cmnm(5)s(2)U34 to nm(5)s(2)U34, followed by the transfer of a methyl group from S-adenosyl-L-methionine to nm(5)s(2)U34, to form mnm(5)s(2)U34. This is tRNA 5-methylaminomethyl-2-thiouridine biosynthesis bifunctional protein MnmC from Pasteurella multocida (strain Pm70).